We begin with the raw amino-acid sequence, 460 residues long: UDP-N-acetylmuramate--L-alanine ligase (460 aa).

Residue 118 to 124 (GAHGKTT) coordinates ATP.

Belongs to the MurCDEF family.

It is found in the cytoplasm. It carries out the reaction UDP-N-acetyl-alpha-D-muramate + L-alanine + ATP = UDP-N-acetyl-alpha-D-muramoyl-L-alanine + ADP + phosphate + H(+). It functions in the pathway cell wall biogenesis; peptidoglycan biosynthesis. Functionally, cell wall formation. This Clostridium botulinum (strain Alaska E43 / Type E3) protein is UDP-N-acetylmuramate--L-alanine ligase.